The primary structure comprises 270 residues: 4-hydroxy-tetrahydrodipicolinate reductase (270 aa).

NAD(+) contacts are provided by residues 11 to 16 (GAGGRM) and Glu37. Arg38 lines the NADP(+) pocket. NAD(+) contacts are provided by residues 101–103 (GTT) and 125–128 (APNM). Residue His158 is the Proton donor/acceptor of the active site. Residue His159 coordinates (S)-2,3,4,5-tetrahydrodipicolinate. The Proton donor role is filled by Lys162. Residue 168–169 (GT) coordinates (S)-2,3,4,5-tetrahydrodipicolinate.

The protein belongs to the DapB family.

It is found in the cytoplasm. It carries out the reaction (S)-2,3,4,5-tetrahydrodipicolinate + NAD(+) + H2O = (2S,4S)-4-hydroxy-2,3,4,5-tetrahydrodipicolinate + NADH + H(+). The catalysed reaction is (S)-2,3,4,5-tetrahydrodipicolinate + NADP(+) + H2O = (2S,4S)-4-hydroxy-2,3,4,5-tetrahydrodipicolinate + NADPH + H(+). Its pathway is amino-acid biosynthesis; L-lysine biosynthesis via DAP pathway; (S)-tetrahydrodipicolinate from L-aspartate: step 4/4. Its function is as follows. Catalyzes the conversion of 4-hydroxy-tetrahydrodipicolinate (HTPA) to tetrahydrodipicolinate. The chain is 4-hydroxy-tetrahydrodipicolinate reductase from Shewanella baltica (strain OS223).